Reading from the N-terminus, the 226-residue chain is Leucyl/phenylalanyl-tRNA--protein transferase (226 aa).

Belongs to the L/F-transferase family.

The protein localises to the cytoplasm. The catalysed reaction is N-terminal L-lysyl-[protein] + L-leucyl-tRNA(Leu) = N-terminal L-leucyl-L-lysyl-[protein] + tRNA(Leu) + H(+). It carries out the reaction N-terminal L-arginyl-[protein] + L-leucyl-tRNA(Leu) = N-terminal L-leucyl-L-arginyl-[protein] + tRNA(Leu) + H(+). It catalyses the reaction L-phenylalanyl-tRNA(Phe) + an N-terminal L-alpha-aminoacyl-[protein] = an N-terminal L-phenylalanyl-L-alpha-aminoacyl-[protein] + tRNA(Phe). Functions in the N-end rule pathway of protein degradation where it conjugates Leu, Phe and, less efficiently, Met from aminoacyl-tRNAs to the N-termini of proteins containing an N-terminal arginine or lysine. This Pseudomonas fluorescens (strain SBW25) protein is Leucyl/phenylalanyl-tRNA--protein transferase.